The primary structure comprises 170 residues: Protein SprT (170 aa).

The SprT-like domain maps to 22–163; it reads LQQANLTLQT…RCRRCGKTLR (142 aa). Histidine 78 is a Zn(2+) binding site. The active site involves glutamate 79. Histidine 82 provides a ligand contact to Zn(2+).

The protein belongs to the SprT family. Zn(2+) is required as a cofactor.

It localises to the cytoplasm. The protein is Protein SprT of Pectobacterium carotovorum subsp. carotovorum (strain PC1).